The following is a 36-amino-acid chain: Photosystem II reaction center protein Psb30 (36 aa).

A helical membrane pass occupies residues 8 to 28 (IIAQLTVVTLTLLAGPVIVFL).

The protein belongs to the Psb30/Ycf12 family. PSII is composed of 1 copy each of membrane proteins PsbA, PsbB, PsbC, PsbD, PsbE, PsbF, PsbH, PsbI, PsbJ, PsbK, PsbL, PsbM, PsbT, PsbX, PsbY, PsbZ, Psb30/Ycf12, peripheral proteins of the oxygen-evolving complex and a large number of cofactors. It forms dimeric complexes.

The protein resides in the plastid. It localises to the cyanelle thylakoid membrane. Its function is as follows. A core subunit of photosystem II (PSII), probably helps stabilize the reaction center. The sequence is that of Photosystem II reaction center protein Psb30 from Cyanophora paradoxa.